Consider the following 324-residue polypeptide: Putative S-adenosyl-L-methionine-dependent methyltransferase MMAR_1059 (324 aa).

S-adenosyl-L-methionine contacts are provided by residues Asp138 and 167–168 (DL).

It belongs to the UPF0677 family.

Exhibits S-adenosyl-L-methionine-dependent methyltransferase activity. This chain is Putative S-adenosyl-L-methionine-dependent methyltransferase MMAR_1059, found in Mycobacterium marinum (strain ATCC BAA-535 / M).